The sequence spans 449 residues: Adenosylhomocysteinase (449 aa).

Residue S2 is modified to N-acetylserine. K21 participates in a covalent cross-link: Glycyl lysine isopeptide (Lys-Gly) (interchain with G-Cter in ubiquitin). Substrate-binding residues include T58, D134, and E159. 160–162 (TTT) provides a ligand contact to NAD(+). Substrate is bound by residues K189 and D193. NAD(+) is bound by residues N194, 223 to 228 (GYGDVG), E246, 302 to 304 (IGH), and N349. T393 carries the post-translational modification Phosphothreonine. A Glycyl lysine isopeptide (Lys-Gly) (interchain with G-Cter in ubiquitin) cross-link involves residue K413.

Belongs to the adenosylhomocysteinase family. Requires NAD(+) as cofactor.

The enzyme catalyses S-adenosyl-L-homocysteine + H2O = L-homocysteine + adenosine. The protein operates within amino-acid biosynthesis; L-homocysteine biosynthesis; L-homocysteine from S-adenosyl-L-homocysteine: step 1/1. Its function is as follows. Adenosylhomocysteine is a competitive inhibitor of S-adenosyl-L-methionine-dependent methyl transferase reactions; therefore adenosylhomocysteinase may play a key role in the control of methylations via regulation of the intracellular concentration of adenosylhomocysteine. The chain is Adenosylhomocysteinase (SAH1) from Saccharomyces cerevisiae (strain ATCC 204508 / S288c) (Baker's yeast).